We begin with the raw amino-acid sequence, 698 residues long: SPX domain-containing membrane protein OsI_21475 (698 aa).

An SPX domain is found at 2–145 (VNFGKKLMAD…GYRFTDYYVT (144 aa)). 6 consecutive transmembrane segments (helical) span residues 248–268 (FMSLMLNLVNTFLYMVNTYII), 279–299 (LGAASTVCGVVIGSMAVAQIF), 316–336 (LIFSSIVLFLGNVCYAMAYDM), 339–357 (LTVLIIGRLLCGMGSARAV), 376–396 (AGFVSASALGMACGPALAGLL), and 412–432 (LPGWVMAVAWLLYLVWLWISF). The tract at residues 467-495 (LLRDSSKKDEDDDEEVDDSEEGTHDSRKP) is disordered. Over residues 476 to 486 (EDDDEEVDDSE) the composition is skewed to acidic residues. The next 5 membrane-spanning stretches (helical) occupy residues 514 to 534 (LLIYFMLKYAMEILLSESSVI), 545 to 565 (AVAIFLAILGLTVLPVNAVVG), 577 to 597 (LLMVSQITLLVGIIFSFKITS), 605 to 625 (VVSALVTFVSAEVLEGVNLSL), and 671 to 691 (LLNVTLLPSLVICAASIASTF).

The protein belongs to the major facilitator superfamily.

The protein resides in the membrane. In Oryza sativa subsp. indica (Rice), this protein is SPX domain-containing membrane protein OsI_21475.